We begin with the raw amino-acid sequence, 123 residues long: Plasminogen (123 aa).

Positions 40–118 (DCYHGNGQSY…RWEFCNLKKC (79 aa)) constitute a Kringle domain. 3 cysteine pairs are disulfide-bonded: Cys41–Cys118, Cys62–Cys101, and Cys90–Cys113.

It belongs to the peptidase S1 family. Plasminogen subfamily. Interacts with CSPG4 and AMOT. Interacts (via the Kringle domains) with HRG; the interaction tethers PLG to the cell surface and enhances its activation. Interacts (via Kringle 4 domain) with ADA; the interaction stimulates PLG activation when in complex with DPP4. Angiostatin: Interacts with ATP5F1A; the interaction inhibits most of the angiogenic effects of angiostatin.

It is found in the secreted. The enzyme catalyses Preferential cleavage: Lys-|-Xaa &gt; Arg-|-Xaa, higher selectivity than trypsin. Converts fibrin into soluble products.. Converted into plasmin by plasminogen activators, both plasminogen and its activator being bound to fibrin. Cannot be activated with streptokinase. In terms of biological role, plasmin dissolves the fibrin of blood clots and acts as a proteolytic factor in a variety of other processes including embryonic development, tissue remodeling, tumor invasion, and inflammation. In ovulation, weakens the walls of the Graafian follicle. It activates the urokinase-type plasminogen activator, collagenases and several complement zymogens, such as C1, C4 and C5. Cleavage of fibronectin and laminin leads to cell detachment and apoptosis. Also cleaves fibrin, thrombospondin and von Willebrand factor. Its role in tissue remodeling and tumor invasion may be modulated by CSPG4. Binds to cells. The sequence is that of Plasminogen (PLG) from Capra hircus (Goat).